We begin with the raw amino-acid sequence, 375 residues long: Methylthioribose-1-phosphate isomerase (375 aa).

Asp259 functions as the Proton donor in the catalytic mechanism.

Belongs to the eIF-2B alpha/beta/delta subunits family. MtnA subfamily.

It localises to the cytoplasm. The protein resides in the nucleus. The enzyme catalyses 5-(methylsulfanyl)-alpha-D-ribose 1-phosphate = 5-(methylsulfanyl)-D-ribulose 1-phosphate. It functions in the pathway amino-acid biosynthesis; L-methionine biosynthesis via salvage pathway; L-methionine from S-methyl-5-thio-alpha-D-ribose 1-phosphate: step 1/6. Functionally, catalyzes the interconversion of methylthioribose-1-phosphate (MTR-1-P) into methylthioribulose-1-phosphate (MTRu-1-P). The chain is Methylthioribose-1-phosphate isomerase from Populus trichocarpa (Western balsam poplar).